The primary structure comprises 455 residues: Bifunctional protein GlmU (455 aa).

The interval 1-226 is pyrophosphorylase; sequence MSLDIVILAA…AMEVQGANDR (226 aa). Residues 8–11, K22, Q73, 78–79, 99–101, G136, E151, N166, and N224 each bind UDP-N-acetyl-alpha-D-glucosamine; these read LAAG, GT, and YGD. A Mg(2+)-binding site is contributed by D101. N224 is a binding site for Mg(2+). The segment at 227 to 247 is linker; sequence RQLSELERHYQLREGRRLMAQ. The segment at 248 to 455 is N-acetyltransferase; it reads GVTLRDPARF…WKRPEKIKKS (208 aa). R330 and K348 together coordinate UDP-N-acetyl-alpha-D-glucosamine. H360 serves as the catalytic Proton acceptor. UDP-N-acetyl-alpha-D-glucosamine is bound by residues Y363 and N374. Acetyl-CoA contacts are provided by residues A377, 383–384, S402, A420, and R437; that span reads NY.

In the N-terminal section; belongs to the N-acetylglucosamine-1-phosphate uridyltransferase family. The protein in the C-terminal section; belongs to the transferase hexapeptide repeat family. Homotrimer. Mg(2+) serves as cofactor.

Its subcellular location is the cytoplasm. The enzyme catalyses alpha-D-glucosamine 1-phosphate + acetyl-CoA = N-acetyl-alpha-D-glucosamine 1-phosphate + CoA + H(+). It carries out the reaction N-acetyl-alpha-D-glucosamine 1-phosphate + UTP + H(+) = UDP-N-acetyl-alpha-D-glucosamine + diphosphate. The protein operates within nucleotide-sugar biosynthesis; UDP-N-acetyl-alpha-D-glucosamine biosynthesis; N-acetyl-alpha-D-glucosamine 1-phosphate from alpha-D-glucosamine 6-phosphate (route II): step 2/2. It functions in the pathway nucleotide-sugar biosynthesis; UDP-N-acetyl-alpha-D-glucosamine biosynthesis; UDP-N-acetyl-alpha-D-glucosamine from N-acetyl-alpha-D-glucosamine 1-phosphate: step 1/1. Its pathway is bacterial outer membrane biogenesis; LPS lipid A biosynthesis. Functionally, catalyzes the last two sequential reactions in the de novo biosynthetic pathway for UDP-N-acetylglucosamine (UDP-GlcNAc). The C-terminal domain catalyzes the transfer of acetyl group from acetyl coenzyme A to glucosamine-1-phosphate (GlcN-1-P) to produce N-acetylglucosamine-1-phosphate (GlcNAc-1-P), which is converted into UDP-GlcNAc by the transfer of uridine 5-monophosphate (from uridine 5-triphosphate), a reaction catalyzed by the N-terminal domain. This is Bifunctional protein GlmU from Pseudomonas putida (strain ATCC 700007 / DSM 6899 / JCM 31910 / BCRC 17059 / LMG 24140 / F1).